Here is a 139-residue protein sequence, read N- to C-terminus: UPF0225 protein Bpro_4182 (139 aa).

Belongs to the UPF0225 family.

This Polaromonas sp. (strain JS666 / ATCC BAA-500) protein is UPF0225 protein Bpro_4182.